The sequence spans 252 residues: Zinc finger protein 511 (252 aa).

3 consecutive C2H2-type zinc fingers follow at residues 80-105, 107-130, and 144-169; these read FACQ…HTLH, NVCS…LEWH, and YQCL…VRMH. The interval 177–221 is disordered; it reads FDKPKKSRSPASAEAPGDSGERSEGEAMEICSEPVAASPAPAGER. Residue arginine 240 is modified to Omega-N-methylarginine.

It belongs to the krueppel C2H2-type zinc-finger protein family.

The protein resides in the nucleus. Its function is as follows. May be involved in transcriptional regulation. This is Zinc finger protein 511 from Homo sapiens (Human).